The primary structure comprises 885 residues: MTTLSPEAFAGHTPMMQQYLRIKADHPDTLVFYRMGDFYELFFEDAEKAARLLDLTLTQRGASAGTPIKMAGVPHHAVEQYLAKLVKMGESVAICEQIGDPATSKGPVERKVVRVVTPGTLTDAALLSDKNDVYLLAMCTGHNKRGVAVNIGLAWLNLASGALRLAEIESEQLAAALERIRPAEILTPDGATDAIPAGAGASKRVPAWHFDIASGTQRLCDQLDVASLDGFGAHSLTSACGAAGALLLYAAATQGQQLRHVRSLKVENETEYIGLDPATRRNLELTETLRGTESPTLYSLLDTCCTTMGSRLLRHWLHHPPRASVAAQSRQQAIGALLDAPANASLDALRSALRQIADVERITGRLALLSARPRDLSSLRDTFAALPALRERISAIVANADALARVDAALAPPAECLDLLTSAIATEPAAMVRDGGVIARGYDAELDELRDISENCGQFLIDLEARERARTGIANLRVEYNKVHGFYIEVTRGQTDKVPDDYRRRQTLKNAERYITPELKTFEDKALSAQERALARERALYDSVLQALLPFIPECQRVASALAELDLLAAFAERARALDWVAPTFTDEIGIEIEQGRHPVVEAQVEQFIANDCRFGPERKLLLITGPNMGGKSTFMRQTALIALMAYVGSYVPAKSACFGPIDRIFTRIGAADDLAGGRSTFMVEMTEAAAILNDATPQSLVLMDEIGRGTSTFDGLALAWAIARHLLAHNACYTLFATHYFELTQLPAEFPQAANVHLSAVEHGHGIVFLHAVNEGPANQSYGLQVAQLAGVPAPVIRAARKHLAYLEQQSASQHTPQLDLFSAPPAAIDDLECADAPALPDTPHPALEKLRDIDPDDLKPREALDLLYELRTLVRSHDADGHA.

Residue 626–633 participates in ATP binding; it reads GPNMGGKS.

It belongs to the DNA mismatch repair MutS family.

Functionally, this protein is involved in the repair of mismatches in DNA. It is possible that it carries out the mismatch recognition step. This protein has a weak ATPase activity. This Burkholderia cenocepacia (strain ATCC BAA-245 / DSM 16553 / LMG 16656 / NCTC 13227 / J2315 / CF5610) (Burkholderia cepacia (strain J2315)) protein is DNA mismatch repair protein MutS.